The primary structure comprises 229 residues: Ribonuclease 3 (229 aa).

Residues 5 to 127 form the RNase III domain; that stretch reads LNRLERKLGH…LIGAIYLDAG (123 aa). E40 lines the Mg(2+) pocket. The active site involves D44. Mg(2+) contacts are provided by D113 and E116. E116 is a catalytic residue. One can recognise a DRBM domain in the interval 154 to 224; that stretch reads DPKTRLQEFL…AAAALVALGV (71 aa).

It belongs to the ribonuclease III family. In terms of assembly, homodimer. It depends on Mg(2+) as a cofactor.

The protein localises to the cytoplasm. It carries out the reaction Endonucleolytic cleavage to 5'-phosphomonoester.. In terms of biological role, digests double-stranded RNA. Involved in the processing of primary rRNA transcript to yield the immediate precursors to the large and small rRNAs (23S and 16S). Processes some mRNAs, and tRNAs when they are encoded in the rRNA operon. Processes pre-crRNA and tracrRNA of type II CRISPR loci if present in the organism. The protein is Ribonuclease 3 of Azotobacter vinelandii (strain DJ / ATCC BAA-1303).